A 238-amino-acid polypeptide reads, in one-letter code: Lactate utilization protein A (238 aa).

It belongs to the LutA/YkgE family.

In terms of biological role, is involved in L-lactate degradation and allows cells to grow with lactate as the sole carbon source. The chain is Lactate utilization protein A from Anoxybacillus flavithermus (strain DSM 21510 / WK1).